Here is a 309-residue protein sequence, read N- to C-terminus: Formimidoylglutamase (309 aa).

Residues His128, Asp153, His155, Asp157, Cys240, and Asp242 each contribute to the Mn(2+) site.

Belongs to the arginase family. It depends on Mn(2+) as a cofactor.

The catalysed reaction is N-formimidoyl-L-glutamate + H2O = formamide + L-glutamate. Its pathway is amino-acid degradation; L-histidine degradation into L-glutamate; L-glutamate from N-formimidoyl-L-glutamate (hydrolase route): step 1/1. Functionally, catalyzes the conversion of N-formimidoyl-L-glutamate to L-glutamate and formamide. The protein is Formimidoylglutamase of Staphylococcus carnosus (strain TM300).